A 459-amino-acid chain; its full sequence is Bifunctional protein GlmU (459 aa).

The segment at 1–230 is pyrophosphorylase; sequence MSNRFAVILA…FDETLGVNDR (230 aa). UDP-N-acetyl-alpha-D-glucosamine is bound by residues 9–12, lysine 23, glutamine 73, and 78–79; these read LAAG and GT. Mg(2+) is bound at residue aspartate 103. Positions 140, 155, 170, and 228 each coordinate UDP-N-acetyl-alpha-D-glucosamine. Asparagine 228 is a Mg(2+) binding site. Residues 231–251 form a linker region; the sequence is VALSQAEIIMKNRINRKNMVN. Positions 252-459 are N-acetyltransferase; the sequence is GVTIIDPSNT…VDQLLNKKKS (208 aa). The UDP-N-acetyl-alpha-D-glucosamine site is built by arginine 333 and lysine 351. Catalysis depends on histidine 363, which acts as the Proton acceptor. UDP-N-acetyl-alpha-D-glucosamine contacts are provided by tyrosine 366 and asparagine 377. Residues 386-387, alanine 423, and arginine 440 each bind acetyl-CoA; that span reads NY.

It in the N-terminal section; belongs to the N-acetylglucosamine-1-phosphate uridyltransferase family. In the C-terminal section; belongs to the transferase hexapeptide repeat family. Homotrimer. Requires Mg(2+) as cofactor.

Its subcellular location is the cytoplasm. The enzyme catalyses alpha-D-glucosamine 1-phosphate + acetyl-CoA = N-acetyl-alpha-D-glucosamine 1-phosphate + CoA + H(+). It carries out the reaction N-acetyl-alpha-D-glucosamine 1-phosphate + UTP + H(+) = UDP-N-acetyl-alpha-D-glucosamine + diphosphate. It participates in nucleotide-sugar biosynthesis; UDP-N-acetyl-alpha-D-glucosamine biosynthesis; N-acetyl-alpha-D-glucosamine 1-phosphate from alpha-D-glucosamine 6-phosphate (route II): step 2/2. The protein operates within nucleotide-sugar biosynthesis; UDP-N-acetyl-alpha-D-glucosamine biosynthesis; UDP-N-acetyl-alpha-D-glucosamine from N-acetyl-alpha-D-glucosamine 1-phosphate: step 1/1. Its pathway is bacterial outer membrane biogenesis; LPS lipid A biosynthesis. Its function is as follows. Catalyzes the last two sequential reactions in the de novo biosynthetic pathway for UDP-N-acetylglucosamine (UDP-GlcNAc). The C-terminal domain catalyzes the transfer of acetyl group from acetyl coenzyme A to glucosamine-1-phosphate (GlcN-1-P) to produce N-acetylglucosamine-1-phosphate (GlcNAc-1-P), which is converted into UDP-GlcNAc by the transfer of uridine 5-monophosphate (from uridine 5-triphosphate), a reaction catalyzed by the N-terminal domain. The sequence is that of Bifunctional protein GlmU from Bacillus cereus (strain AH187).